Reading from the N-terminus, the 387-residue chain is Succinate--CoA ligase [ADP-forming] subunit beta (387 aa).

An ATP-grasp domain is found at 9–244 (KQLFASYGLP…VSQEDDRENR (236 aa)). ATP-binding positions include Lys-46, 53 to 55 (GRG), Glu-99, Cys-102, and Glu-107. 2 residues coordinate Mg(2+): Asn-199 and Asp-213. Substrate-binding positions include Asn-264 and 321–323 (GIV).

Belongs to the succinate/malate CoA ligase beta subunit family. Heterotetramer of two alpha and two beta subunits. The cofactor is Mg(2+).

It catalyses the reaction succinate + ATP + CoA = succinyl-CoA + ADP + phosphate. It carries out the reaction GTP + succinate + CoA = succinyl-CoA + GDP + phosphate. It participates in carbohydrate metabolism; tricarboxylic acid cycle; succinate from succinyl-CoA (ligase route): step 1/1. In terms of biological role, succinyl-CoA synthetase functions in the citric acid cycle (TCA), coupling the hydrolysis of succinyl-CoA to the synthesis of either ATP or GTP and thus represents the only step of substrate-level phosphorylation in the TCA. The beta subunit provides nucleotide specificity of the enzyme and binds the substrate succinate, while the binding sites for coenzyme A and phosphate are found in the alpha subunit. The sequence is that of Succinate--CoA ligase [ADP-forming] subunit beta from Legionella pneumophila (strain Paris).